We begin with the raw amino-acid sequence, 178 residues long: Major urinary protein 4 (178 aa).

Residues 1 to 16 (MKLLLCLGLTLVCIHA) form the signal peptide. The cysteines at positions 80 and 173 are disulfide-linked.

It belongs to the calycin superfamily. Lipocalin family. As to expression, expressed in lacrimal gland, parotid gland, sublingual gland, nasal mucus, and vomeronasal organ.

The protein localises to the secreted. Binds pheromones, likely to displace pheromones complexed to urinary MUPs and transport them to the vomeronasal organ (VNO) where they associate with their neuronal receptor(s). MUP4 is highly specific for the male mouse pheromone 2-sec-butyl-4,5-dihydrothiazole (SBT). In Mus musculus (Mouse), this protein is Major urinary protein 4 (Mup4).